We begin with the raw amino-acid sequence, 1406 residues long: Protein crumbs homolog 1 (1406 aa).

The first 25 residues, 1–25 (MALKNINYLLIFYLSFSLLIYIKNS), serve as a signal peptide directing secretion. The Extracellular portion of the chain corresponds to 26–1347 (FCNKNNTRCL…DDLISDIFTT (1322 aa)). Asn30, Asn41, and Asn42 each carry an N-linked (GlcNAc...) asparagine glycan. EGF-like domains lie at 30-68 (NNTRCLSNSCQNNSTCKDFSKDNDCSCSDTANNLDKDCD), 70-108 (MKDPCFSNPCQGSATCVNTPGERSFLCKCPPGYSGTICE), and 110-146 (TIGSCGKNSCQHGGICHQDPIYPVCICPAGYAGRFCE). 20 cysteine pairs are disulfide-bonded: Cys34–Cys45, Cys39–Cys54, Cys56–Cys67, Cys74–Cys85, Cys79–Cys96, Cys98–Cys107, Cys114–Cys125, Cys119–Cys134, Cys136–Cys145, Cys152–Cys163, Cys157–Cys172, Cys174–Cys183, Cys190–Cys201, Cys195–Cys210, Cys212–Cys221, Cys228–Cys239, Cys233–Cys248, Cys250–Cys259, Cys266–Cys277, and Cys271–Cys286. One can recognise an EGF-like 4; calcium-binding domain in the interval 148–184 (DHDECASSPCQNGAVCQDGIDGYSCFCVPGYQGRHCD). Residues 186–222 (EVDECASDPCKNEATCLNEIGRYTCICPHNYSGVNCE) form the EGF-like 5; calcium-binding domain. The N-linked (GlcNAc...) asparagine glycan is linked to Asn215. An EGF-like 6; calcium-binding domain is found at 224–260 (EIDECWSQPCLNGATCQDALGAYFCDCAPGFLGDHCE). Residues 262–299 (NTDECASQPCLHGGLCVDGENRYSCNCTGSGFTGTHCE) enclose the EGF-like 7; calcium-binding domain. A glycan (N-linked (GlcNAc...) asparagine) is linked at Asn287. Disulfide bonds link Cys288/Cys298, Cys305/Cys316, Cys310/Cys325, Cys327/Cys336, Cys343/Cys354, Cys348/Cys383, Cys385/Cys394, Cys401/Cys412, Cys406/Cys421, Cys423/Cys438, Cys445/Cys456, Cys450/Cys469, and Cys471/Cys480. EGF-like domains follow at residues 301-337 (LMPLCWSKPCHNNATCEDSVDNYTCHCWPGYTGAQCE) and 339-395 (DLNE…IHCE). Asn313 and Asn322 each carry an N-linked (GlcNAc...) asparagine glycan. The 43-residue stretch at 397 to 439 (DVNECSSNPCQNGGTCENLPGNYTCHCPFDNLSRTFYGGRDCS) folds into the EGF-like 10; calcium-binding domain. Residues Asn418, Asn427, and Asn453 are each glycosylated (N-linked (GlcNAc...) asparagine). One can recognise an EGF-like 11 domain in the interval 441–481 (ILLGCTHQQCLNNGTCIPHFQDGQHGFSCLCPSGYTGSLCE). Residues 485–670 (TLSFEGDGFL…GSSLNVKAGC (186 aa)) enclose the Laminin G-like 1 domain. N-linked (GlcNAc...) asparagine glycosylation is found at Asn550, Asn561, and Asn657. Intrachain disulfides connect Cys642–Cys670, Cys676–Cys687, Cys681–Cys696, and Cys698–Cys707. Residues 672–708 (RKDWCESQPCQSRGRCINLWLSYQCDCHRPYEGPNCL) enclose the EGF-like 12 domain. The region spanning 714 to 885 (GRFGQDDSTG…PVLVNVTQGC (172 aa)) is the Laminin G-like 2 domain. Asn757, Asn871, and Asn880 each carry an N-linked (GlcNAc...) asparagine glycan. Disulfide bonds link Cys851/Cys885, Cys891/Cys902, Cys896/Cys911, Cys913/Cys922, Cys928/Cys939, and Cys933/Cys948. 2 EGF-like domains span residues 887 to 923 (GDNSCKSNPCHNGGVCHSRWDDFSCSCPALTSGKACE) and 924 to 960 (EVQWCGFSPCPHGAQCQPVLQGFECIANAVFNGQSGQ). The Laminin G-like 3 domain maps to 950–1137 (ANAVFNGQSG…ISTNSVVTGC (188 aa)). N-linked (GlcNAc...) asparagine glycans are attached at residues Asn968, Asn975, and Asn1000. 16 disulfides stabilise this stretch: Cys1096-Cys1137, Cys1143-Cys1154, Cys1148-Cys1163, Cys1165-Cys1174, Cys1181-Cys1191, Cys1186-Cys1200, Cys1202-Cys1211, Cys1218-Cys1229, Cys1223-Cys1238, Cys1240-Cys1249, Cys1259-Cys1274, Cys1268-Cys1283, Cys1285-Cys1294, Cys1301-Cys1312, Cys1306-Cys1321, and Cys1323-Cys1332. The EGF-like 15 domain occupies 1139-1175 (QLNVCNSNPCLHGGNCEDIYSSYHCSCPLGWSGKHCE). In terms of domain architecture, EGF-like 16; calcium-binding spans 1177–1212 (NIDECFSNPCIHGNCSDRVAAYHCTCEPGYTGVNCE). Asn1190 carries N-linked (GlcNAc...) asparagine glycosylation. EGF-like domains follow at residues 1214–1250 (DIDNCQSHQCANGATCISHTNGYSCLCFGNFTGKFCR) and 1255–1295 (PSTV…EWCE). N-linked (GlcNAc...) asparagine glycosylation is found at Asn1243, Asn1265, and Asn1273. The EGF-like 19; calcium-binding domain occupies 1297–1333 (DIDECASDPCVNGGLCQDLLNKFQCLCDVAFAGERCE). A helical transmembrane segment spans residues 1348 to 1368 (IGSVTVALLLILLLAIVASVV). The Cytoplasmic segment spans residues 1369–1406 (TSNKRATQGTYSPSRQEKEGSRVEMWNLMPPPAMERLI). The tract at residues 1370 to 1406 (SNKRATQGTYSPSRQEKEGSRVEMWNLMPPPAMERLI) is interaction with EPB41L5.

The protein belongs to the Crumbs protein family. In terms of assembly, component of a complex composed of PALS1, CRB1 and EPB41L5. Within the complex, interacts (via intracellular domain) with PALS1 and EPB41L5 (via FERM domain). Forms a complex with MPP4 and PALS1. Interacts with MPDZ/MUPP1 and MPP4. Extensively glycosylated. In terms of tissue distribution, preferential expression in retina, also expressed in brain, testis, fetal brain and fetal eye. Expressed at the outer limiting membrane and apical to adherens junctions in the retina.

The protein resides in the apical cell membrane. It is found in the secreted. The protein localises to the cell projection. It localises to the cilium. Its subcellular location is the photoreceptor outer segment. The protein resides in the photoreceptor inner segment. Plays a role in photoreceptor morphogenesis in the retina. May maintain cell polarization and adhesion. This chain is Protein crumbs homolog 1, found in Homo sapiens (Human).